Reading from the N-terminus, the 307-residue chain is Ribonuclease Z (307 aa).

Residues H63, H65, D67, H68, H141, D212, and H270 each contribute to the Zn(2+) site. D67 functions as the Proton acceptor in the catalytic mechanism.

The protein belongs to the RNase Z family. In terms of assembly, homodimer. Requires Zn(2+) as cofactor.

It catalyses the reaction Endonucleolytic cleavage of RNA, removing extra 3' nucleotides from tRNA precursor, generating 3' termini of tRNAs. A 3'-hydroxy group is left at the tRNA terminus and a 5'-phosphoryl group is left at the trailer molecule.. In terms of biological role, zinc phosphodiesterase, which displays some tRNA 3'-processing endonuclease activity. Probably involved in tRNA maturation, by removing a 3'-trailer from precursor tRNA. This is Ribonuclease Z from Bacillus anthracis (strain A0248).